The following is a 128-amino-acid chain: Ribosome-binding factor A (128 aa).

Belongs to the RbfA family. In terms of assembly, monomer. Binds 30S ribosomal subunits, but not 50S ribosomal subunits or 70S ribosomes.

The protein resides in the cytoplasm. Functionally, one of several proteins that assist in the late maturation steps of the functional core of the 30S ribosomal subunit. Associates with free 30S ribosomal subunits (but not with 30S subunits that are part of 70S ribosomes or polysomes). Required for efficient processing of 16S rRNA. May interact with the 5'-terminal helix region of 16S rRNA. In Saccharophagus degradans (strain 2-40 / ATCC 43961 / DSM 17024), this protein is Ribosome-binding factor A.